The following is a 225-amino-acid chain: Ribosomal RNA small subunit methyltransferase G (225 aa).

S-adenosyl-L-methionine-binding positions include Gly69, 119–120 (AE), and Arg136.

Belongs to the methyltransferase superfamily. RNA methyltransferase RsmG family.

It is found in the cytoplasm. Specifically methylates the N7 position of a guanine in 16S rRNA. This is Ribosomal RNA small subunit methyltransferase G from Pseudothermotoga lettingae (strain ATCC BAA-301 / DSM 14385 / NBRC 107922 / TMO) (Thermotoga lettingae).